The chain runs to 98 residues: Plastocyanin (98 aa).

The Plastocyanin-like domain occupies 1-98 (DVTVKLGADS…AGMKGTITVQ (98 aa)). Cu cation contacts are provided by H38, C83, H86, and M91.

It belongs to the plastocyanin family. Requires Cu(2+) as cofactor.

The protein resides in the plastid. Its subcellular location is the chloroplast thylakoid membrane. Participates in electron transfer between P700 and the cytochrome b6-f complex in photosystem I. In Scenedesmus fuscus (Green alga), this protein is Plastocyanin (petE).